Reading from the N-terminus, the 89-residue chain is Large ribosomal subunit protein uL30 (89 aa).

This sequence belongs to the universal ribosomal protein uL30 family. In terms of assembly, part of the 50S ribosomal subunit.

This is Large ribosomal subunit protein uL30 from Myxococcus xanthus (strain DK1622).